A 323-amino-acid polypeptide reads, in one-letter code: Leukocyte surface antigen CD47 (323 aa).

The first 18 residues, Met1 to Ala18, serve as a signal peptide directing secretion. A Pyrrolidone carboxylic acid modification is found at Gln19. Positions Gln19–Ile127 constitute an Ig-like V-type domain. Over Gln19–Glu141 the chain is Extracellular. Asn23, Asn34, Asn50, and Asn73 each carry an N-linked (GlcNAc...) asparagine glycan. Disulfide bonds link Cys33–Cys263 and Cys41–Cys114. Ser89 carries the post-translational modification Phosphoserine. Asn111 carries an N-linked (GlcNAc...) asparagine glycan. A helical membrane pass occupies residues Asn142–Ile162. The Cytoplasmic segment spans residues Lys163–Thr176. A helical membrane pass occupies residues Ile177–Phe197. The Extracellular segment spans residues Val198–Ala207. Residue Asn206 is glycosylated (N-linked (GlcNAc...) asparagine). The chain crosses the membrane as a helical span at residues Thr208–Phe228. Residues Ser229–Thr235 are Cytoplasmic-facing. A helical membrane pass occupies residues Ser236–Leu256. Residues Ser257–Gly268 are Extracellular-facing. The chain crosses the membrane as a helical span at residues Pro269–Met289. The Cytoplasmic portion of the chain corresponds to Lys290–Glu323.

Monomer. Interacts with THBS1 (via the C-terminal domain). Interacts with SIRPA. Interacts with FAS/CD95; interaction may be enhanced by functional activation. Interacts with SIRPG, UBQLN1 and UBQLN2. May interact with fibrinogen. Interacts with Aedes aegypti neutrophil-stimulating factor 1; the interaction results in inhibition of phagocytosis activity of macrophages. In terms of tissue distribution, very broadly distributed on normal adult tissues, as well as ovarian tumors, being especially abundant in some epithelia and the brain. Macrophages.

The protein localises to the cell membrane. Functionally, adhesive protein that mediates cell-to-cell interactions. Acts as a receptor for thrombospondin THBS1 and as modulator of integrin signaling through the activation of heterotrimeric G proteins. Involved in signal transduction, cardiovascular homeostasis, inflammation, apoptosis, angiogenesis, cellular self-renewal, and immunoregulation. Plays a role in modulating pulmonary endothelin EDN1 signaling. Modulates nitrous oxide (NO) signaling, in response to THBS1, hence playing a role as a pressor agent, supporting blood pressure. Plays an important role in memory formation and synaptic plasticity in the hippocampus. Receptor for SIRPA, binding to which prevents maturation of immature dendritic cells and inhibits cytokine production by mature dendritic cells. Interaction with SIRPG mediates cell-cell adhesion, enhances superantigen-dependent T-cell-mediated proliferation and costimulates T-cell activation. Positively modulates FAS-dependent apoptosis in T-cells, perhaps by enhancing FAS clustering. Plays a role in suppressing angiogenesis and may be involved in metabolic dysregulation during normal aging. In response to THBS1, negatively modulates wound healing. Inhibits stem cell self-renewal, in response to THBS1, probably by regulation of the stem cell transcription factors POU5F1/OCT4, SOX2, MYC/c-Myc and KLF4. May play a role in membrane transport and/or integrin dependent signal transduction. May prevent premature elimination of red blood cells. In Homo sapiens (Human), this protein is Leukocyte surface antigen CD47 (CD47).